A 187-amino-acid chain; its full sequence is Lipoprotein signal peptidase (187 aa).

A run of 3 helical transmembrane segments spans residues 12 to 32 (VAVFACIAIAAIAIDQLTKMW), 68 to 88 (MTWLISLLAMAACVALVVLAV), and 91 to 111 (ISMKWTVLFAFAFAGAFGNLI). Residues D127 and D140 contribute to the active site. The chain crosses the membrane as a helical span at residues 141 to 161 (IFLMLAGVAAVLLLFLGEPFS). Residues 167 to 187 (EANGKTLGDDANATDDGAKAA) are disordered.

It belongs to the peptidase A8 family.

The protein resides in the cell membrane. It catalyses the reaction Release of signal peptides from bacterial membrane prolipoproteins. Hydrolyzes -Xaa-Yaa-Zaa-|-(S,diacylglyceryl)Cys-, in which Xaa is hydrophobic (preferably Leu), and Yaa (Ala or Ser) and Zaa (Gly or Ala) have small, neutral side chains.. The protein operates within protein modification; lipoprotein biosynthesis (signal peptide cleavage). Functionally, this protein specifically catalyzes the removal of signal peptides from prolipoproteins. The chain is Lipoprotein signal peptidase from Bifidobacterium adolescentis (strain ATCC 15703 / DSM 20083 / NCTC 11814 / E194a).